The chain runs to 95 residues: Large ribosomal subunit protein uL23 (95 aa).

Belongs to the universal ribosomal protein uL23 family. Part of the 50S ribosomal subunit. Contacts protein L29, and trigger factor when it is bound to the ribosome.

In terms of biological role, one of the early assembly proteins it binds 23S rRNA. One of the proteins that surrounds the polypeptide exit tunnel on the outside of the ribosome. Forms the main docking site for trigger factor binding to the ribosome. In Rubrobacter xylanophilus (strain DSM 9941 / JCM 11954 / NBRC 16129 / PRD-1), this protein is Large ribosomal subunit protein uL23.